Here is a 735-residue protein sequence, read N- to C-terminus: Rho GTPase-activating protein SYDE1 (735 aa).

Disordered regions lie at residues 1-253, 601-655, and 669-706; these read MAEP…PYEV, PDTR…AGDW, and FLSG…FDAP. Basic and acidic residues predominate over residues 14-47; it reads RGREKLPRKKSDAKDRGRPAQRSEPKPPEPEPRV. The span at 151-160 shows a compositional bias: low complexity; sequence PTKTSRTKSP. Phosphoserine is present on residues S224, S231, S235, and S244. The C2 domain occupies 249-366; that stretch reads RPYEVGPSAR…FRGCQAQQLA (118 aa). Residues 398 to 604 enclose the Rho-GAP domain; it reads LPLQLLVERE…YLLQSWPDTR (207 aa). The span at 669 to 679 shows a compositional bias: basic and acidic residues; that stretch reads FLSGPDYDHVT. Residues S681 and S683 each carry the phosphoserine modification.

In terms of processing, palmitoylated. Probably palmitoylated by ZDHHC3 and ZDHHC7.

Functionally, GTPase activator for the Rho-type GTPases. As a GCM1 downstream effector, it is involved in placental development and positively regulates trophoblast cells migration. It regulates cytoskeletal remodeling by controlling the activity of Rho GTPases including RHOA, CDC42 and RAC1. The sequence is that of Rho GTPase-activating protein SYDE1 (Syde1) from Rattus norvegicus (Rat).